The following is a 222-amino-acid chain: Ribonuclease HII (222 aa).

The 191-residue stretch at 32-222 (FHIAGVDEVG…LIKRYKEDIS (191 aa)) folds into the RNase H type-2 domain. Positions 38, 39, and 130 each coordinate a divalent metal cation.

The protein belongs to the RNase HII family. Mn(2+) serves as cofactor. Requires Mg(2+) as cofactor.

The protein resides in the cytoplasm. It carries out the reaction Endonucleolytic cleavage to 5'-phosphomonoester.. In terms of biological role, endonuclease that specifically degrades the RNA of RNA-DNA hybrids. The protein is Ribonuclease HII of Bartonella bacilliformis (strain ATCC 35685 / KC583 / Herrer 020/F12,63).